The primary structure comprises 311 residues: 2-dehydro-3-deoxygluconokinase (311 aa).

Residues 34-35 (GS), 106-108 (YYR), and R166 contribute to the substrate site. ATP-binding positions include 164 to 166 (NIR), 224 to 229 (KLGPKG), 253 to 256 (GAGD), and S283. The substrate site is built by G253 and D256. The active-site Proton acceptor is D256. D292 is a substrate binding site.

The protein belongs to the carbohydrate kinase PfkB family. As to quaternary structure, homotetramer. A divalent metal cation serves as cofactor.

The enzyme catalyses 2-dehydro-3-deoxy-D-gluconate + ATP = 2-dehydro-3-deoxy-6-phospho-D-gluconate + ADP + H(+). It functions in the pathway carbohydrate acid metabolism; 2-dehydro-3-deoxy-D-gluconate degradation; D-glyceraldehyde 3-phosphate and pyruvate from 2-dehydro-3-deoxy-D-gluconate: step 1/2. In terms of biological role, involved in the degradation of glucose via the semi-phosphorylative Entner-Doudoroff pathway. Catalyzes the phosphorylation of 2-keto-3-deoxygluconate (KDG) to produce 2-keto-3-deoxy-6-phosphogluconate (KDPG). Can also use GTP, but not ADP or AMP, as a phosphoryl donor and 2-keto-D-gluconate (KG) as a phosphoryl acceptor. In Sulfurisphaera tokodaii (strain DSM 16993 / JCM 10545 / NBRC 100140 / 7) (Sulfolobus tokodaii), this protein is 2-dehydro-3-deoxygluconokinase.